We begin with the raw amino-acid sequence, 448 residues long: GTPase Der (448 aa).

2 consecutive EngA-type G domains span residues 3 to 167 (PVIA…EPPE) and 182 to 355 (TRLA…ASAT). Residues 9–16 (GRPNVGKS), 56–60 (DTGGF), 119–122 (NKAE), 188–195 (GRPNVGKS), 235–239 (DTAGL), and 300–303 (NKWD) each bind GTP. The 85-residue stretch at 356–440 (RKLPTPQLTR…PMRIELRASH (85 aa)) folds into the KH-like domain.

Belongs to the TRAFAC class TrmE-Era-EngA-EngB-Septin-like GTPase superfamily. EngA (Der) GTPase family. Associates with the 50S ribosomal subunit.

Functionally, GTPase that plays an essential role in the late steps of ribosome biogenesis. The chain is GTPase Der from Leptothrix cholodnii (strain ATCC 51168 / LMG 8142 / SP-6) (Leptothrix discophora (strain SP-6)).